A 356-amino-acid chain; its full sequence is uncharacterized protein (356 aa).

It belongs to the NAD(P)-dependent epimerase/dehydratase family. NAD(+) serves as cofactor. The cofactor is NADP(+).

Functionally, putative nucleotide sugar epimerase/dehydrogenase. This is an uncharacterized protein from Sinorhizobium fredii (strain NBRC 101917 / NGR234).